Reading from the N-terminus, the 567-residue chain is DNA ligase B (567 aa).

K132 (N6-AMP-lysine intermediate) is an active-site residue.

This sequence belongs to the NAD-dependent DNA ligase family. LigB subfamily.

It catalyses the reaction NAD(+) + (deoxyribonucleotide)n-3'-hydroxyl + 5'-phospho-(deoxyribonucleotide)m = (deoxyribonucleotide)n+m + AMP + beta-nicotinamide D-nucleotide.. Functionally, catalyzes the formation of phosphodiester linkages between 5'-phosphoryl and 3'-hydroxyl groups in double-stranded DNA using NAD as a coenzyme and as the energy source for the reaction. The sequence is that of DNA ligase B from Yersinia pseudotuberculosis serotype O:1b (strain IP 31758).